A 478-amino-acid chain; its full sequence is BTB/POZ domain-containing protein 17 (478 aa).

Positions 1–28 (MPRRGYSKPGSWGSFWAMLTLVGLVTHA) are cleaved as a signal peptide. N61, N100, and N195 each carry an N-linked (GlcNAc...) asparagine glycan. A BTB domain is found at 63-132 (SDVVLRVQAA…LYCGELTVLL (70 aa)). The BACK domain occupies 169–269 (AVGWYHYAVG…IPPAQLFQLQ (101 aa)).

It localises to the secreted. The chain is BTB/POZ domain-containing protein 17 (BTBD17) from Homo sapiens (Human).